The following is a 339-amino-acid chain: Protoheme IX farnesyltransferase (339 aa).

The segment at 1–27 is disordered; that stretch reads MTVADPRLTDAPAHSRTSLLGRRRGGR. 9 helical membrane passes run 45-65, 67-87, 117-136, 140-159, 165-185, 191-211, 236-256, 257-277, and 309-329; these read IVEL…GGLP, GWLI…ANTL, ALVF…VAFV, SAAL…TLLL, QNIV…WTAV, WAPF…YWPL, VSRQ…LLVP, LGGA…GFLV, and PMGV…AVAV.

This sequence belongs to the UbiA prenyltransferase family. Protoheme IX farnesyltransferase subfamily.

It localises to the cell membrane. The enzyme catalyses heme b + (2E,6E)-farnesyl diphosphate + H2O = Fe(II)-heme o + diphosphate. It participates in porphyrin-containing compound metabolism; heme O biosynthesis; heme O from protoheme: step 1/1. In terms of biological role, converts heme B (protoheme IX) to heme O by substitution of the vinyl group on carbon 2 of heme B porphyrin ring with a hydroxyethyl farnesyl side group. The protein is Protoheme IX farnesyltransferase of Kineococcus radiotolerans (strain ATCC BAA-149 / DSM 14245 / SRS30216).